We begin with the raw amino-acid sequence, 93 residues long: uncharacterized protein (93 aa).

This sequence to B.subtilis YdcN C-terminal region.

This is an uncharacterized protein from Methanocaldococcus jannaschii (strain ATCC 43067 / DSM 2661 / JAL-1 / JCM 10045 / NBRC 100440) (Methanococcus jannaschii).